A 564-amino-acid polypeptide reads, in one-letter code: Ubiquitin carboxyl-terminal hydrolase 39 (564 aa).

The tract at residues 1 to 96 is disordered; that stretch reads MSSRSKRQSH…VRAKNGRVDS (96 aa). Residues 28-39 show a composition bias toward basic and acidic residues; that stretch reads IKKERDREKEPE. A Phosphoserine modification is found at S46. Residue K51 forms a Glycyl lysine isopeptide (Lys-Gly) (interchain with G-Cter in SUMO2) linkage. Low complexity predominate over residues 59-69; the sequence is REVPAPALPVV. S81 carries the phosphoserine modification. Over residues 84–96 the composition is skewed to basic and acidic residues; sequence EREVRAKNGRVDS. Residues 102–199 form a UBP-type; degenerate zinc finger; sequence RHCPYLDTIN…YVLKPTFTKQ (98 aa). Positions 135, 138, 154, and 160 each coordinate Zn(2+). The USP domain maps to 224 to 554; it reads VGLNNIKAND…EAYIQIWKRR (331 aa).

Belongs to the peptidase C19 family. In terms of assembly, the U4/U6-U5 tri-snRNP complex is a building block of the precatalytic spliceosome (spliceosome B complex). Component of the U4/U6-U5 tri-snRNP complex composed of the U4, U6 and U5 snRNAs and at least PRPF3, PRPF4, PRPF6, PRPF8, PRPF31, SNRNP200, TXNL4A, SNRNP40, SNRPB, SNRPD1, SNRPD2, SNRPD3, SNRPE, SNRPF, SNRPG, DDX23, CD2BP2, PPIH, SNU13, EFTUD2, SART1 and USP39, plus LSM2, LSM3, LSM4, LSM5, LSM6, LSM7 and LSM8.

The protein localises to the nucleus. It catalyses the reaction Thiol-dependent hydrolysis of ester, thioester, amide, peptide and isopeptide bonds formed by the C-terminal Gly of ubiquitin (a 76-residue protein attached to proteins as an intracellular targeting signal).. In terms of biological role, deubiquitinating enzyme that plays a role in many cellular processes including cellular antiviral response, epithelial morphogenesis, DNA repair or B-cell development. Plays a role in pre-mRNA splicing as a component of the U4/U6-U5 tri-snRNP, one of the building blocks of the precatalytic spliceosome. Specifically regulates immunoglobulin gene rearrangement in a spliceosome-dependent manner, which involves modulating chromatin interactions at the Igh locus and therefore plays an essential role in B-cell development. Regulates AURKB mRNA levels, and thereby plays a role in cytokinesis and in the spindle checkpoint. Regulates apoptosis and G2/M cell cycle checkpoint in response to DNA damage by deubiquitinating and stabilizing CHK2. Also plays an important role in DNA repair by controlling the recruitment of XRCC4/LIG4 to DNA double-strand breaks for non-homologous end-joining repair. Participates in antiviral activity by affecting the type I IFN signaling by stabilizing STAT1 and decreasing its 'Lys-6'-linked ubiquitination. Contributes to non-canonical Wnt signaling during epidermal differentiation. Acts as a negative regulator NF-kappa-B activation through deubiquitination of 'Lys-48'-linked ubiquitination of NFKBIA. The sequence is that of Ubiquitin carboxyl-terminal hydrolase 39 from Mus musculus (Mouse).